The sequence spans 192 residues: Probable apo-citrate lyase phosphoribosyl-dephospho-CoA transferase (192 aa).

It belongs to the CitX family.

It catalyses the reaction apo-[citrate lyase ACP] + 2'-(5''-triphospho-alpha-D-ribosyl)-3'-dephospho-CoA = holo-[citrate lyase ACP] + diphosphate. Its function is as follows. Transfers 2-(5''-triphosphoribosyl)-3'-dephosphocoenzyme-A on a serine residue to the apo-acyl carrier protein (gamma chain) of the citrate lyase to yield holo-acyl carrier protein. The polypeptide is Probable apo-citrate lyase phosphoribosyl-dephospho-CoA transferase (Streptococcus pyogenes serotype M3 (strain ATCC BAA-595 / MGAS315)).